A 539-amino-acid chain; its full sequence is GMP synthase [glutamine-hydrolyzing] (539 aa).

Positions 4-202 constitute a Glutamine amidotransferase type-1 domain; it reads KILILDFGSQ…VLQIAGAKPD (199 aa). The Nucleophile role is filled by Cys81. Residues His176 and Glu178 contribute to the active site. Positions 203–395 constitute a GMPS ATP-PPase domain; that stretch reads WIMKNHIEEA…LGLPPEMVYR (193 aa). 230 to 236 contributes to the ATP binding site; the sequence is SGGVDSS.

Homodimer.

The enzyme catalyses XMP + L-glutamine + ATP + H2O = GMP + L-glutamate + AMP + diphosphate + 2 H(+). The protein operates within purine metabolism; GMP biosynthesis; GMP from XMP (L-Gln route): step 1/1. Functionally, catalyzes the synthesis of GMP from XMP. This Burkholderia cenocepacia (strain ATCC BAA-245 / DSM 16553 / LMG 16656 / NCTC 13227 / J2315 / CF5610) (Burkholderia cepacia (strain J2315)) protein is GMP synthase [glutamine-hydrolyzing].